A 233-amino-acid polypeptide reads, in one-letter code: Ribosome-recycling factor, mitochondrial (233 aa).

This sequence belongs to the RRF family.

Its subcellular location is the mitochondrion. Necessary for protein synthesis in mitochondria. Functions as a ribosome recycling factor in mitochondria. The chain is Ribosome-recycling factor, mitochondrial (RRF1) from Candida glabrata (strain ATCC 2001 / BCRC 20586 / JCM 3761 / NBRC 0622 / NRRL Y-65 / CBS 138) (Yeast).